Here is a 145-residue protein sequence, read N- to C-terminus: Hemoglobin subunit beta-1 (145 aa).

In terms of domain architecture, Globin spans 1-145 (TFTNDESQHI…VEAALATGYH (145 aa)). Positions 62 and 91 each coordinate heme b.

The protein belongs to the globin family. In terms of assembly, major hemoglobin is a tetramer of two alpha-1 chains and two beta-1 chains. Red blood cells.

Functionally, involved in oxygen transport from the lung to the various peripheral tissues. This is Hemoglobin subunit beta-1 (HBB1) from Triturus cristatus (Great crested newt).